A 228-amino-acid chain; its full sequence is Cytochrome b6-f complex iron-sulfur subunit 1, chloroplastic (228 aa).

The N-terminal 49 residues, 1 to 49, are a transit peptide targeting the chloroplast; the sequence is MASSTLSPVTQLCSSKSGLSSVSQCLLVKPMKINSHGLGKDKRMKVKCM. A helical membrane pass occupies residues 72–92; that stretch reads LLGALSLPTAGMLVPYGTFFV. The Rieske domain occupies 115 to 211; that stretch reads ASEWLKTHPP…ADIDDGKVVF (97 aa). Residues Cys-157, His-159, Cys-175, and His-178 each contribute to the [2Fe-2S] cluster site. Cys-162 and Cys-177 are disulfide-bonded.

The protein belongs to the Rieske iron-sulfur protein family. The 4 large subunits of the cytochrome b6-f complex are cytochrome b6, subunit IV (17 kDa polypeptide, petD), cytochrome f and the Rieske protein, while the 4 small subunits are petG, petL, petM and petN. The complex functions as a dimer. It depends on [2Fe-2S] cluster as a cofactor.

The protein resides in the plastid. It localises to the chloroplast thylakoid membrane. The catalysed reaction is 2 oxidized [plastocyanin] + a plastoquinol + 2 H(+)(in) = 2 reduced [plastocyanin] + a plastoquinone + 4 H(+)(out). Component of the cytochrome b6-f complex, which mediates electron transfer between photosystem II (PSII) and photosystem I (PSI), cyclic electron flow around PSI, and state transitions. This chain is Cytochrome b6-f complex iron-sulfur subunit 1, chloroplastic (petC1), found in Nicotiana tabacum (Common tobacco).